Reading from the N-terminus, the 298-residue chain is Arginase (298 aa).

Mn(2+) is bound by residues histidine 98, aspartate 121, histidine 123, and aspartate 125. Substrate is bound by residues 123–127, 134–136, and aspartate 177; these read HGDLN and SGN. Residues aspartate 225 and aspartate 227 each coordinate Mn(2+). 2 residues coordinate substrate: threonine 239 and glutamate 270.

It belongs to the arginase family. Mn(2+) is required as a cofactor.

It carries out the reaction L-arginine + H2O = urea + L-ornithine. It participates in nitrogen metabolism; urea cycle; L-ornithine and urea from L-arginine: step 1/1. In Brevibacillus brevis (Bacillus brevis), this protein is Arginase (rocF).